A 168-amino-acid chain; its full sequence is G/U mismatch-specific DNA glycosylase (168 aa).

It belongs to the uracil-DNA glycosylase (UDG) superfamily. TDG/mug family. As to quaternary structure, binds DNA as a monomer.

It is found in the cytoplasm. The enzyme catalyses Specifically hydrolyzes mismatched double-stranded DNA and polynucleotides, releasing free uracil.. Excises ethenocytosine and uracil, which can arise by alkylation or deamination of cytosine, respectively, from the corresponding mispairs with guanine in ds-DNA. It is capable of hydrolyzing the carbon-nitrogen bond between the sugar-phosphate backbone of the DNA and the mispaired base. The complementary strand guanine functions in substrate recognition. Required for DNA damage lesion repair in stationary-phase cells. This chain is G/U mismatch-specific DNA glycosylase, found in Escherichia fergusonii (strain ATCC 35469 / DSM 13698 / CCUG 18766 / IAM 14443 / JCM 21226 / LMG 7866 / NBRC 102419 / NCTC 12128 / CDC 0568-73).